Here is a 320-residue protein sequence, read N- to C-terminus: Cytochrome f (320 aa).

A signal peptide spans 1–35; sequence MQTRKTFSWIKEQITRSISASLMIYIITRTSISSA. 4 residues coordinate heme: Tyr-36, Cys-56, Cys-59, and His-60. A helical membrane pass occupies residues 286-306; sequence VQGLLFFLASVILAQIFLVLK.

Belongs to the cytochrome f family. As to quaternary structure, the 4 large subunits of the cytochrome b6-f complex are cytochrome b6, subunit IV (17 kDa polypeptide, petD), cytochrome f and the Rieske protein, while the 4 small subunits are PetG, PetL, PetM and PetN. The complex functions as a dimer. The cofactor is heme.

It localises to the plastid. Its subcellular location is the chloroplast thylakoid membrane. Its function is as follows. Component of the cytochrome b6-f complex, which mediates electron transfer between photosystem II (PSII) and photosystem I (PSI), cyclic electron flow around PSI, and state transitions. In Panax ginseng (Korean ginseng), this protein is Cytochrome f.